We begin with the raw amino-acid sequence, 215 residues long: N-(5'-phosphoribosyl)anthranilate isomerase (215 aa).

Belongs to the TrpF family.

The enzyme catalyses N-(5-phospho-beta-D-ribosyl)anthranilate = 1-(2-carboxyphenylamino)-1-deoxy-D-ribulose 5-phosphate. It functions in the pathway amino-acid biosynthesis; L-tryptophan biosynthesis; L-tryptophan from chorismate: step 3/5. This Rhizobium meliloti (strain 1021) (Ensifer meliloti) protein is N-(5'-phosphoribosyl)anthranilate isomerase.